The chain runs to 164 residues: Shikimate kinase (164 aa).

ATP is bound at residue 10-15 (GVGKTT). Thr14 serves as a coordination point for Mg(2+). 3 residues coordinate substrate: Asp28, Arg52, and Gly75. Arg116 lines the ATP pocket. Residue Arg134 participates in substrate binding. Arg151 provides a ligand contact to ATP.

This sequence belongs to the shikimate kinase family. In terms of assembly, monomer. It depends on Mg(2+) as a cofactor.

The protein localises to the cytoplasm. It carries out the reaction shikimate + ATP = 3-phosphoshikimate + ADP + H(+). It participates in metabolic intermediate biosynthesis; chorismate biosynthesis; chorismate from D-erythrose 4-phosphate and phosphoenolpyruvate: step 5/7. Catalyzes the specific phosphorylation of the 3-hydroxyl group of shikimic acid using ATP as a cosubstrate. The chain is Shikimate kinase from Streptococcus equi subsp. zooepidemicus (strain MGCS10565).